We begin with the raw amino-acid sequence, 62 residues long: Large ribosomal subunit protein uL30 (62 aa).

Belongs to the universal ribosomal protein uL30 family. In terms of assembly, part of the 50S ribosomal subunit.

This is Large ribosomal subunit protein uL30 from Polynucleobacter asymbioticus (strain DSM 18221 / CIP 109841 / QLW-P1DMWA-1) (Polynucleobacter necessarius subsp. asymbioticus).